We begin with the raw amino-acid sequence, 149 residues long: Nucleoside diphosphate kinase (149 aa).

Residues K9, F57, R85, T91, R102, and N112 each coordinate ATP. H115 functions as the Pros-phosphohistidine intermediate in the catalytic mechanism.

Belongs to the NDK family. As to quaternary structure, homotetramer. The cofactor is Mg(2+).

It is found in the cytoplasm. The catalysed reaction is a 2'-deoxyribonucleoside 5'-diphosphate + ATP = a 2'-deoxyribonucleoside 5'-triphosphate + ADP. It catalyses the reaction a ribonucleoside 5'-diphosphate + ATP = a ribonucleoside 5'-triphosphate + ADP. Major role in the synthesis of nucleoside triphosphates other than ATP. The ATP gamma phosphate is transferred to the NDP beta phosphate via a ping-pong mechanism, using a phosphorylated active-site intermediate. This is Nucleoside diphosphate kinase from Carboxydothermus hydrogenoformans (strain ATCC BAA-161 / DSM 6008 / Z-2901).